The following is a 273-amino-acid chain: Histone H1.2 (273 aa).

The disordered stretch occupies residues 1-63 (MSIEEENVPT…TKKKTTSSHP (63 aa)). At Ser-2 the chain carries N-acetylserine. Ser-14 is subject to Phosphoserine. Basic residues predominate over residues 33–59 (GKSKKTTTAKATKKPVKAAAPTKKKTT). An H15 domain is found at 61-130 (SHPTYEEMIK…KVKASFKIPS (70 aa)). Glycyl lysine isopeptide (Lys-Gly) (interchain with G-Cter in ubiquitin) cross-links involve residues Lys-156 and Lys-165. Composition is skewed to low complexity over residues 193 to 216 (KVTAAKPKSKSVAAVSKTKAVAAK) and 237 to 256 (KKVAAPAKKVAVTKKAPAKS). Residues 193–273 (KVTAAKPKSK…KRASTRKAKK (81 aa)) are disordered. Basic residues predominate over residues 257–273 (VKVKSPAKRASTRKAKK).

Belongs to the histone H1/H5 family.

The protein resides in the nucleus. It localises to the chromosome. Functionally, histones H1 are necessary for the condensation of nucleosome chains into higher-order structures. The polypeptide is Histone H1.2 (Arabidopsis thaliana (Mouse-ear cress)).